The following is a 1121-amino-acid chain: Ataxin-2 homolog (1121 aa).

The segment covering 1-10 (MNNNSKRKTR) has biased composition (basic residues). The tract at residues 1–53 (MNNNSKRKTRPSGGGGGGGASGGISRYNANDNSLRPANNKSGAAGNSAGAGAG) is disordered. Over residues 12–22 (SGGGGGGGASG) the composition is skewed to gly residues. Positions 27 to 36 (YNANDNSLRP) are enriched in polar residues. A compositionally biased stretch (low complexity) spans 37–47 (ANNKSGAAGNS). A Sm domain is found at 71–146 (FFMHSATALV…VVKIVAKDFD (76 aa)). A phosphoserine mark is found at Ser-219 and Ser-232. Disordered regions lie at residues 270-376 (FAAV…GQGG), 422-458 (GKVM…GGYQ), 476-935 (MHGS…TTGT), and 1039-1076 (QTPQ…TPPT). Over residues 274–310 (ERPEQDHRRDGDRERERNDRDREREERDRDRDRDRGN) the composition is skewed to basic and acidic residues. The span at 323-347 (ETMSSDRYITKQTRGPQMSHVSMSS) shows a compositional bias: polar residues. 2 stretches are compositionally biased toward gly residues: residues 367-376 (ISGGGAGQGG) and 434-448 (SGGG…GNGN). Composition is skewed to polar residues over residues 476-487 (MHGSSQYRNPSH) and 499-524 (ANAN…NSLN). Composition is skewed to low complexity over residues 552–596 (PPLQ…PQRQ), 623–684 (PPQQ…MQHQ), 697–711 (QPHY…QPQP), and 720–773 (QQQQ…APEP). The span at 774–789 (SQQPLPLYHPMPPPQT) shows a compositional bias: pro residues. 2 stretches are compositionally biased toward low complexity: residues 807–825 (ILTA…TPKP) and 835–890 (TTTP…STPV). Pro residues-rich tracts occupy residues 914–926 (PSRP…PVPM) and 1048–1062 (PGQP…PQPS).

The protein belongs to the ataxin-2 family.

Its subcellular location is the cytoplasm. Its function is as follows. Regulator of actin filament formation, though it does not directly assemble with actin filaments. Required for oocyte specification and oocyte positioning in the female germline. Also required for normal eye development and bristle morphology. The protein is Ataxin-2 homolog of Drosophila pseudoobscura pseudoobscura (Fruit fly).